The chain runs to 851 residues: B-box type zinc finger protein ncl-1 (851 aa).

Residues 71–91 (GFGFGSPSSTTSSSPPLSNSP) form a disordered region. The span at 76–91 (SPSSTTSSSPPLSNSP) shows a compositional bias: low complexity. Residues 127 to 174 (VPAVHCSGCKSNETATSFCQDCNANLCDNCTMAHKFMHCFADHRVVSL) form a B box-type 1; atypical zinc finger. Zn(2+) contacts are provided by Cys-132, Cys-135, Cys-156, and His-160. Low complexity predominate over residues 176–197 (TPGTGSSSSSTSSSSSASSTSS). The tract at residues 176-211 (TPGTGSSSSSTSSSSSASSTSSHQVPSLGGKQSPDS) is disordered. The segment at 218 to 261 (KRSVLCLQHRASELVFFCVSCNLAICRDCTVSDHPSGTHQYELI) adopts a B box-type 2 zinc-finger fold. Zn(2+)-binding residues include Cys-223, His-226, Cys-246, and His-251. Residues 303-331 (SLHNAHAQLEETVSNLINVIQDQKKTLAK) are a coiled coil. 5 NHL repeats span residues 573–616 (HCKF…FDKE), 620–665 (KFQF…YNQY), 666–707 (GQFL…FDMF), 708–750 (GNIL…FSYE), and 751–794 (GQYL…FSQD).

In terms of tissue distribution, present in cells in which nucleoli are absent, and absent from large cells in which nucleoli are prominent. Highly expressed in the gonads.

It localises to the cytoplasm. In terms of biological role, translational repressor that inhibits protein synthesis. Represses the translation of mRNAs such as fib-1, probably by being recruited by RNA-binding protein nos-2 and the Pumilio proteins puf-5, puf-8 and puf-9 to the consensus core PUF binding motif in the 3'-UTR of fib-1 mRNA. Negatively regulates ribosomal RNA (rRNA) synthesis, ribosomal protein synthesis and nucleolus size. Its role in the negative regulation of nucleolus size is most likely through its negative regulation of the translation of proteins such as the rRNA 2'-O-methyltransferase fib-1, and dao-5. Might act directly as a transcription factor to inhibit RNA polymerase I (rRNA) and III (5S RNA) transcription. Plays a role in embryonic development, and in particular, is involved in regulating the localization of proteins, such as par-2, that are required for embryonic cell polarity. Plays a role in the regulation of lifespan, and the response to nutrient availability. This is B-box type zinc finger protein ncl-1 from Caenorhabditis elegans.